The following is a 335-amino-acid chain: [Citrate [pro-3S]-lyase] ligase (335 aa).

Residues 1 to 131 (MQFERISTEQ…SATRLQKQCS (131 aa)) enclose the N-acetyltransferase domain.

The enzyme catalyses holo-[citrate lyase ACP] + acetate + ATP = acetyl-[citrate lyase ACP] + AMP + diphosphate. In terms of biological role, acetylation of prosthetic group (2-(5''-phosphoribosyl)-3'-dephosphocoenzyme-A) of the gamma subunit of citrate lyase. This Haemophilus influenzae (strain ATCC 51907 / DSM 11121 / KW20 / Rd) protein is [Citrate [pro-3S]-lyase] ligase (citC).